The primary structure comprises 66 residues: M-poneratoxin-Dq3a (66 aa).

A signal peptide spans 1–23 (MKLSALSIIFGMILVMTIMYTKA). The propeptide occupies 24–43 (EAEAEAEADADADAKAEAEA).

Belongs to the non-disulfide-bridged peptide (NDBP) superfamily. Medium-length antimicrobial peptide (group 3) family. Ponericin-W subfamily. Expressed by the venom gland.

Its subcellular location is the secreted. The protein localises to the target cell membrane. Functionally, may have antimicrobial properties by disrupting the integrity of the bacterial cell membrane. In addition, when tested in vitro on the parasite Trypanosoma cruzi (responsible of the Chagas disease), is able to potently reduce the number of the three forms (epimastigote, trypomastigote and amastigote) by inducing cell death through necrosis. In terms of biological role, may have antimicrobial properties by disrupting the integrity of the bacterial cell membrane. In addition, when tested in vitro on the parasite Trypanosoma cruzi (responsible of the Chagas disease), is able to moderately reduce the number of the forms epimastigote and trypomastigote. Its activity on the amastigote form has not been tested. Its function is as follows. May have antimicrobial properties by disrupting the integrity of the bacterial cell membrane. In addition, when tested in vitro on the parasite Trypanosoma cruzi (responsible of the Chagas disease), shows only a weak reduction of the number of the trypomastigote forms. Has no activity on the epimastigote forms. Its activity on the amastigote form has not been tested. The chain is M-poneratoxin-Dq3a from Dinoponera quadriceps (South American ant).